The sequence spans 525 residues: GMP synthase [glutamine-hydrolyzing] (525 aa).

The region spanning 9–207 is the Glutamine amidotransferase type-1 domain; it reads RILILDFGSQ…ILDICECEAL (199 aa). The active-site Nucleophile is the Cys-86. Catalysis depends on residues His-181 and Glu-183. In terms of domain architecture, GMPS ATP-PPase spans 208-400; sequence WTPSKIAEDA…LGLPYDMVYR (193 aa). 235–241 provides a ligand contact to ATP; sequence SGGVDSS.

Homodimer.

It catalyses the reaction XMP + L-glutamine + ATP + H2O = GMP + L-glutamate + AMP + diphosphate + 2 H(+). It participates in purine metabolism; GMP biosynthesis; GMP from XMP (L-Gln route): step 1/1. Functionally, catalyzes the synthesis of GMP from XMP. The chain is GMP synthase [glutamine-hydrolyzing] from Pseudomonas fluorescens (strain SBW25).